The chain runs to 442 residues: UPF0489 protein C5orf22 (442 aa).

A disordered region spans residues 175-210; the sequence is SSAKKPKLALEDSENTASTNCDSSSEGLEKDTATQR. The segment covering 189–200 has biased composition (polar residues); the sequence is NTASTNCDSSSE.

The protein belongs to the UPF0489 family.

The sequence is that of UPF0489 protein C5orf22 (C5orf22) from Homo sapiens (Human).